We begin with the raw amino-acid sequence, 172 residues long: Adenine phosphoribosyltransferase (172 aa).

It belongs to the purine/pyrimidine phosphoribosyltransferase family. As to quaternary structure, homodimer.

The protein resides in the cytoplasm. It carries out the reaction AMP + diphosphate = 5-phospho-alpha-D-ribose 1-diphosphate + adenine. It participates in purine metabolism; AMP biosynthesis via salvage pathway; AMP from adenine: step 1/1. In terms of biological role, catalyzes a salvage reaction resulting in the formation of AMP, that is energically less costly than de novo synthesis. This chain is Adenine phosphoribosyltransferase, found in Roseiflexus sp. (strain RS-1).